We begin with the raw amino-acid sequence, 133 residues long: Protein NrdI (133 aa).

The protein belongs to the NrdI family.

Functionally, probably involved in ribonucleotide reductase function. The protein is Protein NrdI of Escherichia coli O17:K52:H18 (strain UMN026 / ExPEC).